We begin with the raw amino-acid sequence, 208 residues long: Uracil phosphoribosyltransferase (208 aa).

Residues Arg-78, Arg-103, and Asp-130–Thr-138 each bind 5-phospho-alpha-D-ribose 1-diphosphate. Uracil-binding positions include Ile-193 and Gly-198–Ala-200. Residue Asp-199 coordinates 5-phospho-alpha-D-ribose 1-diphosphate.

The protein belongs to the UPRTase family. The cofactor is Mg(2+).

It carries out the reaction UMP + diphosphate = 5-phospho-alpha-D-ribose 1-diphosphate + uracil. Its pathway is pyrimidine metabolism; UMP biosynthesis via salvage pathway; UMP from uracil: step 1/1. Its activity is regulated as follows. Allosterically activated by GTP. In terms of biological role, catalyzes the conversion of uracil and 5-phospho-alpha-D-ribose 1-diphosphate (PRPP) to UMP and diphosphate. The chain is Uracil phosphoribosyltransferase from Oleidesulfovibrio alaskensis (strain ATCC BAA-1058 / DSM 17464 / G20) (Desulfovibrio alaskensis).